Here is a 371-residue protein sequence, read N- to C-terminus: S-adenosylmethionine:tRNA ribosyltransferase-isomerase (371 aa).

It belongs to the QueA family. Monomer.

It localises to the cytoplasm. It carries out the reaction 7-aminomethyl-7-carbaguanosine(34) in tRNA + S-adenosyl-L-methionine = epoxyqueuosine(34) in tRNA + adenine + L-methionine + 2 H(+). It functions in the pathway tRNA modification; tRNA-queuosine biosynthesis. Functionally, transfers and isomerizes the ribose moiety from AdoMet to the 7-aminomethyl group of 7-deazaguanine (preQ1-tRNA) to give epoxyqueuosine (oQ-tRNA). This chain is S-adenosylmethionine:tRNA ribosyltransferase-isomerase, found in Prochlorococcus marinus (strain MIT 9303).